Here is a 298-residue protein sequence, read N- to C-terminus: Lipoyl synthase (298 aa).

7 residues coordinate [4Fe-4S] cluster: Cys-40, Cys-45, Cys-51, Cys-67, Cys-71, Cys-74, and Ser-280. The Radical SAM core domain occupies 53–269; that stretch reads AVRKTATFMI…KEIALSKGFS (217 aa).

It belongs to the radical SAM superfamily. Lipoyl synthase family. [4Fe-4S] cluster is required as a cofactor.

It is found in the cytoplasm. It catalyses the reaction [[Fe-S] cluster scaffold protein carrying a second [4Fe-4S](2+) cluster] + N(6)-octanoyl-L-lysyl-[protein] + 2 oxidized [2Fe-2S]-[ferredoxin] + 2 S-adenosyl-L-methionine + 4 H(+) = [[Fe-S] cluster scaffold protein] + N(6)-[(R)-dihydrolipoyl]-L-lysyl-[protein] + 4 Fe(3+) + 2 hydrogen sulfide + 2 5'-deoxyadenosine + 2 L-methionine + 2 reduced [2Fe-2S]-[ferredoxin]. It functions in the pathway protein modification; protein lipoylation via endogenous pathway; protein N(6)-(lipoyl)lysine from octanoyl-[acyl-carrier-protein]. Functionally, catalyzes the radical-mediated insertion of two sulfur atoms into the C-6 and C-8 positions of the octanoyl moiety bound to the lipoyl domains of lipoate-dependent enzymes, thereby converting the octanoylated domains into lipoylated derivatives. In Bacillus cytotoxicus (strain DSM 22905 / CIP 110041 / 391-98 / NVH 391-98), this protein is Lipoyl synthase.